The sequence spans 115 residues: Divalent-cation tolerance protein CutA (115 aa).

3 residues coordinate Cu cation: Cys-19, His-86, and His-87.

This sequence belongs to the CutA family. As to quaternary structure, homotrimer. Requires Cu cation as cofactor.

It is found in the cytoplasm. Its function is as follows. Involved in resistance toward heavy metals. The protein is Divalent-cation tolerance protein CutA of Citrobacter koseri (strain ATCC BAA-895 / CDC 4225-83 / SGSC4696).